Reading from the N-terminus, the 245-residue chain is Nucleoprotein (245 aa).

Residues Tyr30, Lys67, Arg106, Arg186, and Ser196 each contribute to the RNA site.

This sequence belongs to the phlebovirus nucleocapsid protein family. In terms of assembly, homodimer. Homohexamer; ring-shaped, necessary to form the nucleocapsid. Homopentamers; opened pentamers in solution. Binds to viral genomic RNA. Interacts with glycoprotein Gn; this interaction allows packaging of nucleocapsids into virions.

It localises to the virion. The protein resides in the host cytoplasm. Its subcellular location is the host nucleus. It is found in the host endoplasmic reticulum-Golgi intermediate compartment. The protein localises to the host Golgi apparatus. Functionally, encapsidates the genomic RNA, protecting it from nucleases. Displays high affinity for single-stranded nucleic acid. The encapsidated genomic RNA is termed the nucleocapsid (NC) or ribonucleoprotein. The ribonucleoprotein has a non-helical structure. Serves as template for viral transcription and replication. After replication, the nucleocapsid is recruited to the host Golgi apparatus by glycoprotein Gn for packaging into virus particles. In Dabie bandavirus (Severe fever with thrombocytopenia virus), this protein is Nucleoprotein (NP).